The sequence spans 299 residues: MTEQTTTPDGLVIVDKPSGFTSHDVVAKMRGIARTRRVGHAGTLDPMATGVLVLGVQRATKLLGHLALTEKEYLGTIRLGQDTVTDDAEGEITSSTDASGVTRASIDAGVAALTGRIMQVPSKVSAIKIDGKRSYARVRGGEEFEIPARPVTISSFRVYDVREAVAEDGTPVLDLVVSVVCSSGTYIRAIARDLGAGLGVGGHLTALRRTRVGPYGLDAARTLDQHQEELTVMPVAEAAASAFPRWDVDEKRAKLLLNGVRLDMPAHPPGPVAVFGPDGAFLVLVEEEKGKAKSLAVFA.

The Nucleophile role is filled by aspartate 45.

It belongs to the pseudouridine synthase TruB family. Type 1 subfamily.

The enzyme catalyses uridine(55) in tRNA = pseudouridine(55) in tRNA. Responsible for synthesis of pseudouridine from uracil-55 in the psi GC loop of transfer RNAs. In Streptomyces griseus subsp. griseus (strain JCM 4626 / CBS 651.72 / NBRC 13350 / KCC S-0626 / ISP 5235), this protein is tRNA pseudouridine synthase B.